The chain runs to 1167 residues: ATP-dependent helicase/deoxyribonuclease subunit B (1167 aa).

Positions 1 to 359 constitute a UvrD-like helicase ATP-binding domain; that stretch reads MSLRFLLGRS…IRQTEAYRDL (359 aa). 8–15 lines the ATP pocket; the sequence is GRSGSGKT. The UvrD-like helicase C-terminal domain maps to 282–588; sequence ANRRHEDRAL…EFSLVPPAMD (307 aa). The [4Fe-4S] cluster site is built by Cys804, Cys1126, Cys1129, and Cys1135.

This sequence belongs to the helicase family. AddB/RexB type 1 subfamily. In terms of assembly, heterodimer of AddA and AddB. Mg(2+) is required as a cofactor. Requires [4Fe-4S] cluster as cofactor.

Its function is as follows. The heterodimer acts as both an ATP-dependent DNA helicase and an ATP-dependent, dual-direction single-stranded exonuclease. Recognizes the chi site generating a DNA molecule suitable for the initiation of homologous recombination. The AddB subunit has 5' -&gt; 3' nuclease activity but not helicase activity. This Geobacillus kaustophilus (strain HTA426) protein is ATP-dependent helicase/deoxyribonuclease subunit B.